Consider the following 217-residue polypeptide: ATP-dependent Clp protease proteolytic subunit 1 (217 aa).

A disordered region spans residues methionine 1–serine 24. Catalysis depends on serine 108, which acts as the Nucleophile. Histidine 133 is a catalytic residue.

Belongs to the peptidase S14 family. Fourteen ClpP subunits assemble into 2 heptameric rings which stack back to back to give a disk-like structure with a central cavity, resembling the structure of eukaryotic proteasomes.

It localises to the cytoplasm. It carries out the reaction Hydrolysis of proteins to small peptides in the presence of ATP and magnesium. alpha-casein is the usual test substrate. In the absence of ATP, only oligopeptides shorter than five residues are hydrolyzed (such as succinyl-Leu-Tyr-|-NHMec, and Leu-Tyr-Leu-|-Tyr-Trp, in which cleavage of the -Tyr-|-Leu- and -Tyr-|-Trp bonds also occurs).. Functionally, cleaves peptides in various proteins in a process that requires ATP hydrolysis. Has a chymotrypsin-like activity. Plays a major role in the degradation of misfolded proteins. The protein is ATP-dependent Clp protease proteolytic subunit 1 of Streptomyces avermitilis (strain ATCC 31267 / DSM 46492 / JCM 5070 / NBRC 14893 / NCIMB 12804 / NRRL 8165 / MA-4680).